The chain runs to 310 residues: 3,5-dioxohexanoate:acetyl-CoA acetone transferase (310 aa).

Zn(2+) contacts are provided by His49, His51, and Glu258.

The protein belongs to the BKACE family. Zn(2+) is required as a cofactor.

It catalyses the reaction 3,5-dioxohexanoate + acetyl-CoA = acetoacetyl-CoA + acetoacetate. Its function is as follows. Catalyzes the condensation of 3,5-dioxohexanoate and acetyl-CoA, forming acetoacetate and acetoacetyl-CoA. May be involved in fatty acid biosynthesis rescue via triacetic acid lactone. The polypeptide is 3,5-dioxohexanoate:acetyl-CoA acetone transferase (Paraburkholderia graminis (strain ATCC 700544 / DSM 17151 / LMG 18924 / NCIMB 13744 / C4D1M)).